Here is a 230-residue protein sequence, read N- to C-terminus: Large ribosomal subunit protein uL1 (230 aa).

This sequence belongs to the universal ribosomal protein uL1 family. Part of the 50S ribosomal subunit.

Functionally, binds directly to 23S rRNA. The L1 stalk is quite mobile in the ribosome, and is involved in E site tRNA release. In terms of biological role, protein L1 is also a translational repressor protein, it controls the translation of the L11 operon by binding to its mRNA. The protein is Large ribosomal subunit protein uL1 of Rubrobacter xylanophilus (strain DSM 9941 / JCM 11954 / NBRC 16129 / PRD-1).